The primary structure comprises 110 residues: Cytochrome c6 (110 aa).

The N-terminal stretch at 1-25 (MKKKLSVLFTVFSFFVIGFAQIAFA) is a signal peptide. Heme c is bound by residues Cys-39, Cys-42, His-43, and Met-83.

This sequence belongs to the cytochrome c family. PetJ subfamily. In terms of assembly, monomer. Binds 1 heme c group covalently per subunit.

Its subcellular location is the plastid. It is found in the chloroplast thylakoid lumen. Functions as an electron carrier between membrane-bound cytochrome b6-f and photosystem I in oxygenic photosynthesis. This chain is Cytochrome c6 (petJ), found in Pyropia yezoensis (Susabi-nori).